The sequence spans 154 residues: Large ribosomal subunit protein uL13 (154 aa).

The protein belongs to the universal ribosomal protein uL13 family. In terms of assembly, part of the 50S ribosomal subunit.

This protein is one of the early assembly proteins of the 50S ribosomal subunit, although it is not seen to bind rRNA by itself. It is important during the early stages of 50S assembly. The polypeptide is Large ribosomal subunit protein uL13 (Brucella suis (strain ATCC 23445 / NCTC 10510)).